The chain runs to 499 residues: Glycerol kinase (499 aa).

T12 lines the ADP pocket. Residues T12, T13, and S14 each contribute to the ATP site. T12 is a binding site for sn-glycerol 3-phosphate. R16 contributes to the ADP binding site. Sn-glycerol 3-phosphate-binding residues include R82, E83, Y134, and D243. The glycerol site is built by R82, E83, Y134, D243, and Q244. The ADP site is built by T265 and G308. Residues T265, G308, Q312, and G409 each contribute to the ATP site. Residues G409 and N413 each contribute to the ADP site.

The protein belongs to the FGGY kinase family. As to quaternary structure, homotetramer and homodimer (in equilibrium).

The enzyme catalyses glycerol + ATP = sn-glycerol 3-phosphate + ADP + H(+). It participates in polyol metabolism; glycerol degradation via glycerol kinase pathway; sn-glycerol 3-phosphate from glycerol: step 1/1. With respect to regulation, activated by phosphorylation and inhibited by fructose 1,6-bisphosphate (FBP). Its function is as follows. Key enzyme in the regulation of glycerol uptake and metabolism. Catalyzes the phosphorylation of glycerol to yield sn-glycerol 3-phosphate. This chain is Glycerol kinase, found in Lachnoclostridium phytofermentans (strain ATCC 700394 / DSM 18823 / ISDg) (Clostridium phytofermentans).